The following is a 50-amino-acid chain: MALKKASLACAVCGSRNYSIKISGNPKPTRLEVNKFCKHCGKYTTHRETR.

This sequence belongs to the bacterial ribosomal protein bL33 family.

The sequence is that of Large ribosomal subunit protein bL33B from Streptococcus pneumoniae (strain ATCC BAA-255 / R6).